The sequence spans 505 residues: Deoxyguanosinetriphosphate triphosphohydrolase (505 aa).

An HD domain is found at arginine 66 to cysteine 273.

The protein belongs to the dGTPase family. Type 1 subfamily. As to quaternary structure, homotetramer. It depends on Mg(2+) as a cofactor.

The catalysed reaction is dGTP + H2O = 2'-deoxyguanosine + triphosphate + H(+). Inhibited by the action of reducing agents such as dithiothreitol and 2-mercaptoethanol. Its function is as follows. dGTPase preferentially hydrolyzes dGTP over the other canonical NTPs. This is Deoxyguanosinetriphosphate triphosphohydrolase from Shigella boydii.